We begin with the raw amino-acid sequence, 215 residues long: Outer-membrane lipoprotein LolB (215 aa).

The N-terminal stretch at Met-1 to Gly-19 is a signal peptide. Cys-20 carries N-palmitoyl cysteine lipidation. Residue Cys-20 is the site of S-diacylglycerol cysteine attachment.

Belongs to the LolB family. Monomer.

Its subcellular location is the cell outer membrane. Functionally, plays a critical role in the incorporation of lipoproteins in the outer membrane after they are released by the LolA protein. The protein is Outer-membrane lipoprotein LolB of Vibrio atlanticus (strain LGP32) (Vibrio splendidus (strain Mel32)).